A 44-amino-acid chain; its full sequence is Brevinin-1PLa (44 aa).

A propeptide spanning residues 1-18 is cleaved from the precursor; that stretch reads NAEEERRDEPDETDVEVE. Residues C38 and C44 are joined by a disulfide bond.

In terms of tissue distribution, expressed by the skin glands.

It is found in the secreted. Its function is as follows. Antimicrobial peptide. In Lithobates palustris (Pickerel frog), this protein is Brevinin-1PLa.